The following is a 208-amino-acid chain: Uracil phosphoribosyltransferase (208 aa).

Residues Arg-78, Arg-103, and 130-138 contribute to the 5-phospho-alpha-D-ribose 1-diphosphate site; that span reads DPMLATGGS. Uracil contacts are provided by residues Ile-193 and 198–200; that span reads GDA. Asp-199 serves as a coordination point for 5-phospho-alpha-D-ribose 1-diphosphate.

Belongs to the UPRTase family. It depends on Mg(2+) as a cofactor.

The enzyme catalyses UMP + diphosphate = 5-phospho-alpha-D-ribose 1-diphosphate + uracil. Its pathway is pyrimidine metabolism; UMP biosynthesis via salvage pathway; UMP from uracil: step 1/1. Allosterically activated by GTP. In terms of biological role, catalyzes the conversion of uracil and 5-phospho-alpha-D-ribose 1-diphosphate (PRPP) to UMP and diphosphate. The protein is Uracil phosphoribosyltransferase of Trichlorobacter lovleyi (strain ATCC BAA-1151 / DSM 17278 / SZ) (Geobacter lovleyi).